Consider the following 406-residue polypeptide: Phosphoglycerate kinase (406 aa).

Substrate contacts are provided by residues 23-25 (DIN), R38, 61-64 (HQGR), R117, and R157. ATP is bound by residues E331 and 357–360 (GGHI).

This sequence belongs to the phosphoglycerate kinase family. As to quaternary structure, monomer.

The protein resides in the cytoplasm. It catalyses the reaction (2R)-3-phosphoglycerate + ATP = (2R)-3-phospho-glyceroyl phosphate + ADP. The protein operates within carbohydrate degradation; glycolysis; pyruvate from D-glyceraldehyde 3-phosphate: step 2/5. This Methanopyrus kandleri (strain AV19 / DSM 6324 / JCM 9639 / NBRC 100938) protein is Phosphoglycerate kinase.